Reading from the N-terminus, the 281-residue chain is 32 kDa heat shock protein (281 aa).

The span at 142 to 168 shows a compositional bias: acidic residues; that stretch reads EDDEEIDSDEEFGDSDQDEEDSDDEEI. The interval 142–281 is disordered; the sequence is EDDEEIDSDE…NENNKKKQKN (140 aa). The segment covering 180–209 has biased composition (basic and acidic residues); that stretch reads KITEISEVPESKKEKTPEPKKVPEPKKEQV. Positions 210–273 are enriched in low complexity; it reads KQPTQPQQKK…NNKRPQNQNE (64 aa).

This is 32 kDa heat shock protein (hspC) from Dictyostelium discoideum (Social amoeba).